A 1070-amino-acid polypeptide reads, in one-letter code: DNA-directed RNA polymerase subunit beta (1070 aa).

The protein belongs to the RNA polymerase beta chain family. In terms of assembly, in plastids the minimal PEP RNA polymerase catalytic core is composed of four subunits: alpha, beta, beta', and beta''. When a (nuclear-encoded) sigma factor is associated with the core the holoenzyme is formed, which can initiate transcription.

The protein localises to the plastid. Its subcellular location is the chloroplast. The enzyme catalyses RNA(n) + a ribonucleoside 5'-triphosphate = RNA(n+1) + diphosphate. Functionally, DNA-dependent RNA polymerase catalyzes the transcription of DNA into RNA using the four ribonucleoside triphosphates as substrates. The polypeptide is DNA-directed RNA polymerase subunit beta (Lotus japonicus (Lotus corniculatus var. japonicus)).